Here is a 63-residue protein sequence, read N- to C-terminus: Putative ankyrin repeat protein RF_p14 (63 aa).

ANK repeat units follow at residues 11-43 (KLNQ…CRDH) and 44-63 (QGDT…ILDI).

In Rickettsia felis (strain ATCC VR-1525 / URRWXCal2) (Rickettsia azadi), this protein is Putative ankyrin repeat protein RF_p14.